The chain runs to 91 residues: Elongation factor 1-beta (91 aa).

This sequence belongs to the EF-1-beta/EF-1-delta family.

Functionally, promotes the exchange of GDP for GTP in EF-1-alpha/GDP, thus allowing the regeneration of EF-1-alpha/GTP that could then be used to form the ternary complex EF-1-alpha/GTP/AAtRNA. The chain is Elongation factor 1-beta from Sulfurisphaera tokodaii (strain DSM 16993 / JCM 10545 / NBRC 100140 / 7) (Sulfolobus tokodaii).